The chain runs to 536 residues: 2,3-bisphosphoglycerate-independent phosphoglycerate mutase (536 aa).

The Mn(2+) site is built by Asp19 and Ser69. Ser69 acts as the Phosphoserine intermediate in catalysis. Residues His130, 160–161, Arg192, Arg198, 262–265, and Lys335 each bind substrate; these read RD and RPDR. The Mn(2+) site is built by Asp402, His406, Asp443, His444, and His461.

The protein belongs to the BPG-independent phosphoglycerate mutase family. In terms of assembly, monomer. Mn(2+) is required as a cofactor.

The enzyme catalyses (2R)-2-phosphoglycerate = (2R)-3-phosphoglycerate. The protein operates within carbohydrate degradation; glycolysis; pyruvate from D-glyceraldehyde 3-phosphate: step 3/5. Functionally, catalyzes the interconversion of 2-phosphoglycerate and 3-phosphoglycerate. This is 2,3-bisphosphoglycerate-independent phosphoglycerate mutase from Gloeobacter violaceus (strain ATCC 29082 / PCC 7421).